The primary structure comprises 407 residues: Arginine biosynthesis bifunctional protein ArgJ (407 aa).

Substrate is bound by residues Thr-157, Lys-183, Thr-194, Glu-280, Asn-402, and Thr-407. The Nucleophile role is filled by Thr-194.

This sequence belongs to the ArgJ family. As to quaternary structure, heterotetramer of two alpha and two beta chains.

The protein resides in the cytoplasm. It carries out the reaction N(2)-acetyl-L-ornithine + L-glutamate = N-acetyl-L-glutamate + L-ornithine. It catalyses the reaction L-glutamate + acetyl-CoA = N-acetyl-L-glutamate + CoA + H(+). It functions in the pathway amino-acid biosynthesis; L-arginine biosynthesis; L-ornithine and N-acetyl-L-glutamate from L-glutamate and N(2)-acetyl-L-ornithine (cyclic): step 1/1. It participates in amino-acid biosynthesis; L-arginine biosynthesis; N(2)-acetyl-L-ornithine from L-glutamate: step 1/4. Functionally, catalyzes two activities which are involved in the cyclic version of arginine biosynthesis: the synthesis of N-acetylglutamate from glutamate and acetyl-CoA as the acetyl donor, and of ornithine by transacetylation between N(2)-acetylornithine and glutamate. This Bacillus cereus (strain ATCC 10987 / NRS 248) protein is Arginine biosynthesis bifunctional protein ArgJ.